We begin with the raw amino-acid sequence, 371 residues long: Flagellar P-ring protein (371 aa).

A signal peptide spans 1–24 (MSIRVLLFSIFTGFLLAAAGPALA). The segment covering 301–321 (PQPFSSGTTATQPQTDISAQK) has biased composition (polar residues). A disordered region spans residues 301 to 322 (PQPFSSGTTATQPQTDISAQKT).

Belongs to the FlgI family. The basal body constitutes a major portion of the flagellar organelle and consists of four rings (L,P,S, and M) mounted on a central rod.

It localises to the periplasm. The protein resides in the bacterial flagellum basal body. Assembles around the rod to form the L-ring and probably protects the motor/basal body from shearing forces during rotation. This is Flagellar P-ring protein from Allorhizobium ampelinum (strain ATCC BAA-846 / DSM 112012 / S4) (Agrobacterium vitis (strain S4)).